The sequence spans 79 residues: Sulfur carrier protein TusA (79 aa).

Cys17 acts as the Cysteine persulfide intermediate in catalysis.

This sequence belongs to the sulfur carrier protein TusA family.

The protein resides in the cytoplasm. Functionally, sulfur carrier protein which probably makes part of a sulfur-relay system. In Pasteurella multocida (strain Pm70), this protein is Sulfur carrier protein TusA.